Consider the following 754-residue polypeptide: MWKLLPAAGPAGGEPYRLLTGVEYVVGRKNCAILIEKDQSISRNHAVLTANFSVTNLSQTDEIPVLALKDNSKYGTFVNEEKMQNGFSRTLKSGDSITFGVFESKFRIEYEPLVACSSCLDVSGKTALNQAILQLGGFTVNNWTEECTHLVMVSVKVTIKTICALICGRPIVKPEYFTEFLKAVQSKKQLPQIESFYPPLDEPSIGSKNVDLSGRQERKQIFKGKTFIFLNAKQHKKLSSAVVFGGGEARLITEENEEEHNFFLAPGTCVVDTGITNSQTLIPDCQKKWIQSIMDMLQRQGLRPIPEAEIGLAVIFMTTKNYCDPQGHPSTGLKTTTPGPSLSQGLSVDEKLMPSAPVNTTTYVADTESEQADTWDLSERPKEIKVSKMEQKFRMLSQDAPTVKESCKTSSNNNSMVSNTLAKMRIPNYQLSPTKLPSINKSKDRASQQQQTNSIRNYFQPSTKKRERDEENQEMSSCKSARIEMSCSLLEQTQPAIPLLWKNKEQHLSENEPVDTNSDNNLFTDTDLISTVKNSASKSHAAEKLRSNKKREMHDVTIEDEVLEQLLKDTKPELEIEVKVQKQEEDVNIRKRPRMDVETNDTFSDKAVPESSKISQENEIGKKHELKEESLWSTKEISNNDKLQDHSEMLPKKLLLTEFRSLVIKNSTSRNPSGINGDYGLLKNFKKFKKVTYPGAGKLPHIIGGSDLIAHHARKNTELEEWLRQEMEVQNQHAKEESLADDLFRYNPYLKRRR.

Residues 24–83 (YVVGRKNCAILIEKDQSISRNHAVLTANFSVTNLSQTDEIPVLALKDNSKYGTFVNEEKM) form the FHA domain. BRCT domains are found at residues 105-181 (KFRI…TEFL) and 224-315 (GKTF…LAVI). Residues 111–328 (EPLVACSSCL…TKNYCDPQGH (218 aa)) are mediates interaction with SP100. An interaction with MTOR, MAPKAP1 and RICTOR region spans residues 221–402 (IFKGKTFIFL…FRMLSQDAPT (182 aa)). Ser-278 carries the phosphoserine; by ATM modification. The tract at residues 326 to 346 (QGHPSTGLKTTTPGPSLSQGL) is disordered. A compositionally biased stretch (polar residues) spans 328 to 346 (HPSTGLKTTTPGPSLSQGL). A Phosphothreonine modification is found at Thr-337. Ser-343 carries the post-translational modification Phosphoserine; by ATM. Ser-347 bears the Phosphoserine mark. An N6-lactoyllysine modification is found at Lys-388. 2 disordered regions span residues 396–415 (LSQDAPTVKESCKTSSNNNS) and 431–475 (LSPT…NQEM). The residue at position 397 (Ser-397) is a Phosphoserine. Thr-402 carries the phosphothreonine modification. Composition is skewed to polar residues over residues 431–440 (LSPTKLPSIN) and 447–462 (SQQQQTNSIRNYFQPS). Residue Ser-432 is modified to Phosphoserine. A Glycyl lysine isopeptide (Lys-Gly) (interchain with G-Cter in ubiquitin) cross-link involves residue Lys-435. Residues 461–467 (PSTKKRE) carry the Nuclear localization signal motif. A phosphoserine mark is found at Ser-509 and Ser-518. Residues Lys-571 and Lys-582 each participate in a glycyl lysine isopeptide (Lys-Gly) (interchain with G-Cter in SUMO2) cross-link. Residues Ser-615 and Ser-673 each carry the phosphoserine modification. Residues Lys-686, Lys-690, and Lys-735 each participate in a glycyl lysine isopeptide (Lys-Gly) (interchain with G-Cter in ubiquitin) cross-link. The short motif at 740–749 (ADDLFRYNPY) is the FxF/Y motif element.

The protein belongs to the Nibrin family. In terms of assembly, component of the MRN complex composed of two heterodimers RAD50 and MRE11 associated with a single NBN. The MRN complexes dimerize on DNA to form joined MRN-MRN oligomers required for DNA double-strand break repair. The MRN complexes dimerize on DNA to form joined MRN-MRN oligomers required for DNA double-strand break repair. As part of the MRN complex, interacts with MCM9; the interaction recruits the complex to DNA repair sites. Component of the BASC complex, at least composed of BRCA1, MSH2, MSH6, MLH1, ATM, BLM, RAD50, MRE11 and NBN. Interacts with histone H2AX; this requires phosphorylation of H2AX on 'Ser-139' and promotes NBN recruitment to DNA damage sites. Interacts with (phosphorylated) MDC1; promoting NBN recruitment to DNA damage sites. Interacts with (phosphorylated) RAD17; promoting NBN recruitment to DNA damage sites. Interacts (via FxF/Y motif) with ATM. Interacts with HJURP. Interacts with INTS3. Interacts with KPNA2. Interacts with TERF2; interaction is disrupted upon NBN phosphorylation by CDK2. Interacts with (phosphorylated) RBBP8/CtIP; the interaction links the role of the MRN complex in DNA double-strand break sensing to resection. Interacts with SP100; recruits NBN to PML bodies. Interacts with ATF2. Interacts with MTOR, MAPKAP1 isoform 2 and RICTOR; indicative for an association with the mTORC2 complex. Interacts with MRNIP. Interacts with UFL1; promoting UFL1 recruitment to double-strand breaks following DNA damage. Interacts with CYREN (via XLF motif). In terms of processing, phosphorylated by ATM in response of ionizing radiation, and such phosphorylation is responsible intra-S phase checkpoint control and telomere maintenance. Phosphorylated at Ser-432 by CDK2 in S/G2 phases abolishes interaction with TERF2, enabling DCLRE1B/Apollo recruitment to telomeres. Phosphorylation at Ser-432 in response to dysfunctional telomeres promotes non-homologous end joining repair at telomeres, while dephosphorylation by PPP1CA promotes microhomology-mediated end-joining (MMEJ) repair. Ubiquitinated at Lys-435 via 'Lys-6'-linked ubiquitin chains by RNF8, promoting NBN recruitment to DNA double-strand breaks (DSBs). Ubiquitinated at Lys-686 and Lys-689 via 'Lys-63'-linked ubiquitin chains by PELI1: ubiquitination takes place following PELI1 phosphorylation and promotes ATM activation and DNA repair. Ubiquitinated at Lys-735 via 'Lys-63'-linked ubiquitin chains by the SCF(SKP2) complex: ubiquitination takes place following SKP2 phosphorylation and promotes ATM activation and DNA repair. Post-translationally, lactylation at Lys-388 by KAT5 in response to DNA damage promotes recruitment of the MRN complex to DNA damage sites. Delactylated by HDAC3.

The protein localises to the nucleus. Its subcellular location is the chromosome. It is found in the PML body. The protein resides in the telomere. In terms of biological role, component of the MRN complex, which plays a central role in double-strand break (DSB) repair, DNA recombination, maintenance of telomere integrity and meiosis. The MRN complex is involved in the repair of DNA double-strand breaks (DSBs) via homologous recombination (HR), an error-free mechanism which primarily occurs during S and G2 phases. The complex (1) mediates the end resection of damaged DNA, which generates proper single-stranded DNA, a key initial steps in HR, and is (2) required for the recruitment of other repair factors and efficient activation of ATM and ATR upon DNA damage. The MRN complex possesses single-strand endonuclease activity and double-strand-specific 3'-5' exonuclease activity, which are provided by MRE11, to initiate end resection, which is required for single-strand invasion and recombination. Within the MRN complex, NBN acts as a protein-protein adapter, which specifically recognizes and binds phosphorylated proteins, promoting their recruitment to DNA damage sites. Recruits MRE11 and RAD50 components of the MRN complex to DSBs in response to DNA damage. Promotes the recruitment of PI3/PI4-kinase family members ATM, ATR, and probably DNA-PKcs to the DNA damage sites, activating their functions. Mediates the recruitment of phosphorylated RBBP8/CtIP to DSBs, leading to cooperation between the MRN complex and RBBP8/CtIP to initiate end resection. RBBP8/CtIP specifically promotes the endonuclease activity of the MRN complex to clear DNA ends containing protein adducts. The MRN complex is also required for the processing of R-loops. NBN also functions in telomere length maintenance via its interaction with TERF2: interaction with TERF2 during G1 phase preventing recruitment of DCLRE1B/Apollo to telomeres. NBN also promotes DNA repair choice at dysfunctional telomeres: NBN phosphorylation by CK2 promotes non-homologous end joining repair at telomeres, while unphosphorylated NBN promotes microhomology-mediated end-joining (MMEJ) repair. Enhances AKT1 phosphorylation possibly by association with the mTORC2 complex. This Pongo abelii (Sumatran orangutan) protein is Nibrin (NBN).